The chain runs to 339 residues: Cobalt-precorrin-5B C(1)-methyltransferase (339 aa).

It belongs to the CbiD family.

It carries out the reaction Co-precorrin-5B + S-adenosyl-L-methionine = Co-precorrin-6A + S-adenosyl-L-homocysteine. It functions in the pathway cofactor biosynthesis; adenosylcobalamin biosynthesis; cob(II)yrinate a,c-diamide from sirohydrochlorin (anaerobic route): step 6/10. Functionally, catalyzes the methylation of C-1 in cobalt-precorrin-5B to form cobalt-precorrin-6A. The protein is Cobalt-precorrin-5B C(1)-methyltransferase of Methanosarcina acetivorans (strain ATCC 35395 / DSM 2834 / JCM 12185 / C2A).